Here is a 94-residue protein sequence, read N- to C-terminus: Large ribosomal subunit protein bL25 (94 aa).

Belongs to the bacterial ribosomal protein bL25 family. Part of the 50S ribosomal subunit; part of the 5S rRNA/L5/L18/L25 subcomplex. Contacts the 5S rRNA. Binds to the 5S rRNA independently of L5 and L18.

Functionally, this is one of the proteins that binds to the 5S RNA in the ribosome where it forms part of the central protuberance. The polypeptide is Large ribosomal subunit protein bL25 (Pectobacterium carotovorum subsp. carotovorum (strain PC1)).